The following is a 3329-amino-acid chain: Breast cancer type 2 susceptibility protein homolog (3329 aa).

Residues 1 to 40 (MPVEYKRRPTFWEIFKARCSTADLGPISLNWFEELSSEAP) form an interaction with PALB2 region. 2 disordered regions span residues 37–69 (SEAPPYNSEPPEESEYKPHGYEPQLFKTPQRNP) and 207–241 (EARSSVTPADSPATLKSCFSNHNESPQKNDRSVPS). Residues Ser-435 and Ser-481 each carry the phosphoserine modification. Residues 628–650 (PDSSDKKRCLPNDPEEPSLTNSF) form a disordered region. Residues 628–979 (PDSSDKKRCL…DKWSEFLDPV (352 aa)) are interaction with NPM1. Ser-735 is subject to Phosphoserine. Residues 934 to 953 (EKSRNNIEQHQKGTEDKDFK) show a composition bias toward basic and acidic residues. Positions 934–965 (EKSRNNIEQHQKGTEDKDFKSNSSLNMKSDGN) are disordered. The segment covering 954 to 965 (SNSSLNMKSDGN) has biased composition (polar residues). 2 BRCA2 repeats span residues 981 to 1015 (NHNFGGSFRTASNKEIKLSEHNVKKSKMFFKDIEE) and 1192 to 1226 (NEMEFGGFCSALGTKLSVSNEALRKAMKLFSDIEN). The interaction with RAD51 stretch occupies residues 982–2035 (HNFGGSFRTA…LHKVKGMLEE (1054 aa)). Residues 1296–1340 (NTKHEDSYTSSQRNNLENSDGSMSSTSGPVYIHKGDSDLPADQGS) form a disordered region. Residues 1303 to 1323 (YTSSQRNNLENSDGSMSSTSG) show a composition bias toward polar residues. 5 BRCA2 repeats span residues 1394 to 1428 (IKEFNISFQTASGKNTRVSKESLNKSVNIFNRETD), 1491 to 1525 (KEPTLLSFHTASGKKVKIMQESLDKVKNLFDETQY), 1623 to 1657 (TEDSALAYYTEDSRKTCVRESSLSKGRKWLREQGD), 1924 to 1958 (PSRTYGIFSTASGKAIQVSDASLEKARQVFSEMDG), and 2004 to 2038 (NSSVFSGFSTAGGKLVTVSESALHKVKGMLEEFDL). A Phosphoserine modification is found at Ser-2048. The tract at residues 2073 to 2099 (NSKLQKTYNDKSSLPSNYKESGSSGNT) is disordered. Over residues 2074-2099 (SKLQKTYNDKSSLPSNYKESGSSGNT) the composition is skewed to polar residues. The interval 2219–2285 (KRGGVTVDAV…EPVTCGPFCS (67 aa)) is interaction with HSF2BP. Residues 2298-2466 (TSPAQELLSK…SPKQLYIYGV (169 aa)) are interaction with FANCD2. Residues 2361-2393 (FHGDEHFNSKNVNLEGKNQKSTDGDREDGNDSH) form a disordered region. Residues 2377-2393 (KNQKSTDGDREDGNDSH) show a composition bias toward basic and acidic residues. The interval 2402–2753 (MSSLQSARDL…QRVYPLQWVE (352 aa)) is interaction with SEM1. Residues 2603–2619 (AAKTLVLCISDIISPST) carry the Nuclear export signal; masked by interaction with SEM1 motif. Ser-3214 carries the post-translational modification Phosphoserine; by CDK1 and CDK2. Disordered regions lie at residues 3221–3257 (FQPPRSCGTKYATPIKKEPSSPRRRTPFQKTSGVSLP) and 3273–3329 (QALT…AVES). Residue Ser-3241 is modified to Phosphoserine. Residues 3309-3329 (SRKESLRDCRGDSSEKLAVES) show a composition bias toward basic and acidic residues.

In terms of assembly, monomer and dimer. Interacts with RAD51; regulates RAD51 recruitment and function at sites of DNA repair. Interacts with SEM1, WDR16, USP11, DMC1, ROCK2 and NPM1. Interacts with both nonubiquitinated and monoubiquitinated FANCD2; this complex also includes XRCC3 and phosphorylated FANCG. Part of a BRCA complex containing BRCA1, BRCA2 and PALB2. Component of the homologous recombination repair (HR) complex composed of ERCC5/XPG, BRCA2, PALB2, DSS1 and RAD51. Within the complex, interacts with ERCC5/XPG and PALB2. Interacts directly with PALB2 which may serve as a scaffold for a HR complex containing PALB2, BRCA2, RAD51C, RAD51 and XRCC3. Interacts with BRCA1 only in the presence of PALB2 which serves as the bridging protein. Interacts with POLH; the interaction is direct. Interacts with the TREX-2 complex subunits PCID2 and SEM1. Interacts with HSF2BP and BRME1; the interaction with HSF2BP is direct and allows the formation of a ternary complex. The complex BRME1:HSF2BP:BRCA2 interacts with SPATA22, MEIOB and RAD51. In terms of processing, phosphorylated by ATM upon irradiation-induced DNA damage. Phosphorylation by CHEK1 and CHEK2 regulates interaction with RAD51. Phosphorylation at Ser-3291 by CDK1 and CDK2 is low in S phase when recombination is active, but increases as cells progress towards mitosis; this phosphorylation prevents homologous recombination-dependent repair during S phase and G2 by inhibiting RAD51 binding. Ubiquitinated in the absence of DNA damage; this does not lead to proteasomal degradation. In contrast, ubiquitination in response to DNA damage leads to proteasomal degradation. Widely expressed. Highest expression in cerebellum, testis, ileum, appendix, epididymis, ovary and mammary gland. No expression in lung.

The protein resides in the nucleus. It localises to the cytoplasm. It is found in the cytoskeleton. Its subcellular location is the microtubule organizing center. The protein localises to the centrosome. Involved in double-strand break repair and/or homologous recombination. Binds RAD51 and potentiates recombinational DNA repair by promoting assembly of RAD51 onto single-stranded DNA (ssDNA). Acts by targeting RAD51 to ssDNA over double-stranded DNA, enabling RAD51 to displace replication protein-A (RPA) from ssDNA and stabilizing RAD51-ssDNA filaments by blocking ATP hydrolysis. Part of a PALB2-scaffolded HR complex containing RAD51C and which is thought to play a role in DNA repair by HR. May participate in S phase checkpoint activation. Binds selectively to ssDNA, and to ssDNA in tailed duplexes and replication fork structures. May play a role in the extension step after strand invasion at replication-dependent DNA double-strand breaks; together with PALB2 is involved in both POLH localization at collapsed replication forks and DNA polymerization activity. In concert with NPM1, regulates centrosome duplication. Interacts with the TREX-2 complex (transcription and export complex 2) subunits PCID2 and SEM1, and is required to prevent R-loop-associated DNA damage and thus transcription-associated genomic instability, independently of its known role in homologous recombination. The polypeptide is Breast cancer type 2 susceptibility protein homolog (Mus musculus (Mouse)).